A 278-amino-acid chain; its full sequence is Bifunctional protein FolD (278 aa).

NADP(+)-binding positions include 162–164 (GAG) and Ile-228.

This sequence belongs to the tetrahydrofolate dehydrogenase/cyclohydrolase family. As to quaternary structure, homodimer.

The catalysed reaction is (6R)-5,10-methylene-5,6,7,8-tetrahydrofolate + NADP(+) = (6R)-5,10-methenyltetrahydrofolate + NADPH. It catalyses the reaction (6R)-5,10-methenyltetrahydrofolate + H2O = (6R)-10-formyltetrahydrofolate + H(+). It participates in one-carbon metabolism; tetrahydrofolate interconversion. Its function is as follows. Catalyzes the oxidation of 5,10-methylenetetrahydrofolate to 5,10-methenyltetrahydrofolate and then the hydrolysis of 5,10-methenyltetrahydrofolate to 10-formyltetrahydrofolate. This Hydrogenobaculum sp. (strain Y04AAS1) protein is Bifunctional protein FolD.